Here is a 462-residue protein sequence, read N- to C-terminus: Histidine--tRNA ligase (462 aa).

It belongs to the class-II aminoacyl-tRNA synthetase family. As to quaternary structure, homodimer.

The protein resides in the cytoplasm. It catalyses the reaction tRNA(His) + L-histidine + ATP = L-histidyl-tRNA(His) + AMP + diphosphate + H(+). The chain is Histidine--tRNA ligase (hisS) from Nostoc sp. (strain PCC 7120 / SAG 25.82 / UTEX 2576).